Reading from the N-terminus, the 206-residue chain is Tetrathionate response regulatory protein TtrR (206 aa).

Positions 3 to 117 (TIHLLDDDTA…PLQAALERAL (115 aa)) constitute a Response regulatory domain. D52 carries the 4-aspartylphosphate modification. Residues 134-194 (QQLTPKEREL…ELIRRFEKMA (61 aa)) enclose the HTH luxR-type domain. Residues 153–172 (NREIAEAMNIAVRTVEVHRA) constitute a DNA-binding region (H-T-H motif).

Phosphorylated by TtrS.

Its subcellular location is the cytoplasm. Its function is as follows. Member of the two-component regulatory system TtrR/TtrS, which is required for synthesis of tetrathionate reductase. Positively regulates transcription of the ttrBCA operon. During mice infection, the ability to use tetrathionate as an electron acceptor is a growth advantage for S.typhimurium over the competing microbiota in the lumen of the inflamed gut. The chain is Tetrathionate response regulatory protein TtrR (ttrR) from Salmonella typhimurium (strain LT2 / SGSC1412 / ATCC 700720).